Here is a 76-residue protein sequence, read N- to C-terminus: MTDVETTYADFIASGRTGRRNAIHDILVSSASGNSNELALKLAGLDINKTEGEDDGQRSSTEQSGEAQGEAAKSES.

Thr-2 bears the N-acetylthreonine mark. Positions 49–76 (KTEGEDDGQRSSTEQSGEAQGEAAKSES) are disordered.

It belongs to the PKI family. As to expression, present at high levels in skeletal muscle and brain but is present at lower levels in heart, testis and liver.

Its function is as follows. Extremely potent competitive inhibitor of cAMP-dependent protein kinase activity, this protein interacts with the catalytic subunit of the enzyme after the cAMP-induced dissociation of its regulatory chains. The sequence is that of cAMP-dependent protein kinase inhibitor alpha (Pkia) from Mus musculus (Mouse).